We begin with the raw amino-acid sequence, 297 residues long: Protein phosphatase PTC7 homolog (297 aa).

The N-terminal 27 residues, 1-27 (MFSVLSCGRLVARAVFGGLSQTDSRDY), are a transit peptide targeting the mitochondrion. One can recognise a PPM-type phosphatase domain in the interval 28 to 292 (SLVTASCGFG…DDITVLLSIV (265 aa)). Residues Asp71, Gly72, and Asp216 each coordinate Mn(2+).

It belongs to the PP2C family. Mg(2+) serves as cofactor. The cofactor is Mn(2+).

The protein resides in the mitochondrion matrix. It carries out the reaction O-phospho-L-seryl-[protein] + H2O = L-seryl-[protein] + phosphate. The enzyme catalyses O-phospho-L-threonyl-[protein] + H2O = L-threonyl-[protein] + phosphate. Its function is as follows. Protein phosphatase which positively regulates biosynthesis of the ubiquinone, coenzyme Q. Dephosphorylates the ubiquinone biosynthesis protein coq7 which is likely to lead to its activation. This chain is Protein phosphatase PTC7 homolog (pptc7), found in Xenopus laevis (African clawed frog).